The primary structure comprises 156 residues: Putative pre-16S rRNA nuclease (156 aa).

The protein belongs to the YqgF nuclease family.

The protein resides in the cytoplasm. In terms of biological role, could be a nuclease involved in processing of the 5'-end of pre-16S rRNA. In Nocardioides sp. (strain ATCC BAA-499 / JS614), this protein is Putative pre-16S rRNA nuclease.